Consider the following 281-residue polypeptide: 4-diphosphocytidyl-2-C-methyl-D-erythritol kinase (281 aa).

K15 is a catalytic residue. 98 to 108 contacts ATP; the sequence is PTGAGLGGGSS. D140 is a catalytic residue.

The protein belongs to the GHMP kinase family. IspE subfamily.

The enzyme catalyses 4-CDP-2-C-methyl-D-erythritol + ATP = 4-CDP-2-C-methyl-D-erythritol 2-phosphate + ADP + H(+). It functions in the pathway isoprenoid biosynthesis; isopentenyl diphosphate biosynthesis via DXP pathway; isopentenyl diphosphate from 1-deoxy-D-xylulose 5-phosphate: step 3/6. Functionally, catalyzes the phosphorylation of the position 2 hydroxy group of 4-diphosphocytidyl-2C-methyl-D-erythritol. The polypeptide is 4-diphosphocytidyl-2-C-methyl-D-erythritol kinase (Neisseria gonorrhoeae (strain ATCC 700825 / FA 1090)).